The chain runs to 420 residues: Isocitrate dehydrogenase [NADP] (420 aa).

Residues 75-77 (TIT) and arginine 82 each bind NADP(+). Threonine 77 provides a ligand contact to substrate. Substrate is bound by residues 94–100 (SPNGTIR), arginine 109, and arginine 132. Residue aspartate 252 coordinates Mn(2+). NADP(+) is bound at residue lysine 260. Residue aspartate 275 participates in Mn(2+) binding. NADP(+) contacts are provided by residues 310–315 (GTVTRH) and asparagine 328.

This sequence belongs to the isocitrate and isopropylmalate dehydrogenases family. The cofactor is Mg(2+). It depends on Mn(2+) as a cofactor.

It catalyses the reaction D-threo-isocitrate + NADP(+) = 2-oxoglutarate + CO2 + NADPH. In terms of biological role, may function in the production of NADPH for fatty acid and sterol synthesis. The polypeptide is Isocitrate dehydrogenase [NADP] (IDP3) (Saccharomyces cerevisiae (strain ATCC 204508 / S288c) (Baker's yeast)).